The primary structure comprises 127 residues: Small ribosomal subunit protein uS12 (127 aa).

Asp-89 carries the post-translational modification 3-methylthioaspartic acid.

It belongs to the universal ribosomal protein uS12 family. As to quaternary structure, part of the 30S ribosomal subunit. Contacts proteins S8 and S17. May interact with IF1 in the 30S initiation complex.

In terms of biological role, with S4 and S5 plays an important role in translational accuracy. Interacts with and stabilizes bases of the 16S rRNA that are involved in tRNA selection in the A site and with the mRNA backbone. Located at the interface of the 30S and 50S subunits, it traverses the body of the 30S subunit contacting proteins on the other side and probably holding the rRNA structure together. The combined cluster of proteins S8, S12 and S17 appears to hold together the shoulder and platform of the 30S subunit. The polypeptide is Small ribosomal subunit protein uS12 (Nautilia profundicola (strain ATCC BAA-1463 / DSM 18972 / AmH)).